The chain runs to 409 residues: Nucleoprotein (409 aa).

2 disordered regions span residues Met-1–Arg-84 and Ala-121–Asp-194. Residues Pro-15 to Gly-31 show a composition bias toward low complexity. The segment at Ser-29 to Leu-160 is RNA-binding. The 126-residue stretch at Gly-31 to Asp-156 folds into the CoV N NTD domain. Residues Tyr-70–Arg-84 show a composition bias toward basic residues. Residues Arg-162–Ala-179 are compositionally biased toward low complexity. Basic and acidic residues predominate over residues Pro-180 to Ser-192. Ser-190 and Ser-192 each carry phosphoserine; by host. In terms of domain architecture, CoV N CTD spans Thr-215 to Pro-331. Positions Arg-226 to Asp-333 are dimerization. Intrachain disulfides connect Cys-281–Cys-308 and Cys-320–Cys-323. Residues Val-327–Val-396 form a disordered region. Basic residues predominate over residues Gln-358–Lys-367. A compositionally biased stretch (basic and acidic residues) spans Lys-368 to Asn-384. The residue at position 378 (Thr-378) is a Phosphothreonine; by host. Ser-379 carries the post-translational modification Phosphoserine; by host.

Belongs to the gammacoronavirus nucleocapsid protein family. In terms of assembly, homooligomer. Both monomeric and oligomeric forms interact with RNA. Interacts with protein M. Interacts with NSP3; this interaction serves to tether the genome to the newly translated replicase-transcriptase complex at a very early stage of infection. Post-translationally, ADP-ribosylated. The ADP-ribosylation is retained in the virion during infection. Phosphorylated on serine and threonine residues.

The protein resides in the virion. Its subcellular location is the host endoplasmic reticulum-Golgi intermediate compartment. It localises to the host Golgi apparatus. Its function is as follows. Packages the positive strand viral genome RNA into a helical ribonucleocapsid (RNP) and plays a fundamental role during virion assembly through its interactions with the viral genome and membrane protein M. Plays an important role in enhancing the efficiency of subgenomic viral RNA transcription as well as viral replication. The protein is Nucleoprotein of Gallus gallus (Chicken).